The chain runs to 415 residues: Gamma-glutamyl phosphate reductase (415 aa).

Belongs to the gamma-glutamyl phosphate reductase family.

The protein localises to the cytoplasm. It catalyses the reaction L-glutamate 5-semialdehyde + phosphate + NADP(+) = L-glutamyl 5-phosphate + NADPH + H(+). Its pathway is amino-acid biosynthesis; L-proline biosynthesis; L-glutamate 5-semialdehyde from L-glutamate: step 2/2. Functionally, catalyzes the NADPH-dependent reduction of L-glutamate 5-phosphate into L-glutamate 5-semialdehyde and phosphate. The product spontaneously undergoes cyclization to form 1-pyrroline-5-carboxylate. The protein is Gamma-glutamyl phosphate reductase of Bacillus cereus (strain ZK / E33L).